The following is a 214-amino-acid chain: Probable transaldolase (214 aa).

K83 acts as the Schiff-base intermediate with substrate in catalysis.

It belongs to the transaldolase family. Type 3B subfamily.

Its subcellular location is the cytoplasm. It carries out the reaction D-sedoheptulose 7-phosphate + D-glyceraldehyde 3-phosphate = D-erythrose 4-phosphate + beta-D-fructose 6-phosphate. It participates in carbohydrate degradation; pentose phosphate pathway; D-glyceraldehyde 3-phosphate and beta-D-fructose 6-phosphate from D-ribose 5-phosphate and D-xylulose 5-phosphate (non-oxidative stage): step 2/3. Transaldolase is important for the balance of metabolites in the pentose-phosphate pathway. The protein is Probable transaldolase of Maridesulfovibrio salexigens (strain ATCC 14822 / DSM 2638 / NCIMB 8403 / VKM B-1763) (Desulfovibrio salexigens).